The primary structure comprises 504 residues: Probable cytosol aminopeptidase (504 aa).

Mn(2+) contacts are provided by K276 and D281. K288 is a catalytic residue. D299, D358, and E360 together coordinate Mn(2+). The active site involves R362.

This sequence belongs to the peptidase M17 family. Mn(2+) serves as cofactor.

Its subcellular location is the cytoplasm. It carries out the reaction Release of an N-terminal amino acid, Xaa-|-Yaa-, in which Xaa is preferably Leu, but may be other amino acids including Pro although not Arg or Lys, and Yaa may be Pro. Amino acid amides and methyl esters are also readily hydrolyzed, but rates on arylamides are exceedingly low.. The catalysed reaction is Release of an N-terminal amino acid, preferentially leucine, but not glutamic or aspartic acids.. Presumably involved in the processing and regular turnover of intracellular proteins. Catalyzes the removal of unsubstituted N-terminal amino acids from various peptides. The sequence is that of Probable cytosol aminopeptidase from Bordetella avium (strain 197N).